Here is a 603-residue protein sequence, read N- to C-terminus: Probable potassium transport system protein Kup (603 aa).

Transmembrane regions (helical) follow at residues 15 to 35, 43 to 63, 94 to 114, 136 to 156, 163 to 183, 201 to 221, 244 to 264, 284 to 304, 336 to 356, 367 to 387, 391 to 411, and 415 to 435; these read GLVF…IFLL, VIGV…VEYA, AAFI…DGVI, IGQG…FSVQ, ITWV…FSGI, AISF…EVIL, AWRL…AFII, IYIP…QAMI, IYIG…IFEF, GLAV…IFYL, MFRS…LLSN, and IPHG…LIII.

It belongs to the HAK/KUP transporter (TC 2.A.72) family.

Its subcellular location is the cell membrane. It catalyses the reaction K(+)(in) + H(+)(in) = K(+)(out) + H(+)(out). Functionally, transport of potassium into the cell. Likely operates as a K(+):H(+) symporter. The polypeptide is Probable potassium transport system protein Kup (Methanosarcina acetivorans (strain ATCC 35395 / DSM 2834 / JCM 12185 / C2A)).